A 315-amino-acid chain; its full sequence is MGLTEGLFLILSGTQFALGILVNCFIGLVNGSSWFKTKRMSLSDFIITTLAFLRIILLCIILTDSFLIEFSPNAHDSGVIMQIIDVSWTFTNHLSIWLATCLGVLYCLKIASFSHPTFLWLKWRVSRVMVWMLLGVLLLSCGSTASLINEFKLYSVFRGIEATXNVTEHFRKKRSEYYLIHVLGTLWYLPPLIVSLAAYFLLIFSLGRHTRQMLQNGTSSRDPSTEAHKRAIRIILSSFFLFLLYFLAFLIASFGNFLPKTKMAKMIGEVMTMFYPAGHSFILILGNSKLKQTFVEMLRCESGHLKPGSKGPIFS.

The Extracellular segment spans residues 1 to 5; the sequence is MGLTE. The helical transmembrane segment at 6 to 26 threads the bilayer; that stretch reads GLFLILSGTQFALGILVNCFI. At 27–41 the chain is on the cytoplasmic side; that stretch reads GLVNGSSWFKTKRMS. A helical membrane pass occupies residues 42–62; that stretch reads LSDFIITTLAFLRIILLCIIL. The Extracellular portion of the chain corresponds to 63–93; the sequence is TDSFLIEFSPNAHDSGVIMQIIDVSWTFTNH. A helical membrane pass occupies residues 94–114; that stretch reads LSIWLATCLGVLYCLKIASFS. Residues 115-127 are Cytoplasmic-facing; the sequence is HPTFLWLKWRVSR. The chain crosses the membrane as a helical span at residues 128-148; the sequence is VMVWMLLGVLLLSCGSTASLI. Over 149 to 185 the chain is Extracellular; sequence NEFKLYSVFRGIEATXNVTEHFRKKRSEYYLIHVLGT. Asn-165 is a glycosylation site (N-linked (GlcNAc...) asparagine). The helical transmembrane segment at 186 to 206 threads the bilayer; sequence LWYLPPLIVSLAAYFLLIFSL. Over 207–233 the chain is Cytoplasmic; the sequence is GRHTRQMLQNGTSSRDPSTEAHKRAIR. A helical membrane pass occupies residues 234 to 254; sequence IILSSFFLFLLYFLAFLIASF. Topologically, residues 255–265 are extracellular; that stretch reads GNFLPKTKMAK. Residues 266–286 form a helical membrane-spanning segment; the sequence is MIGEVMTMFYPAGHSFILILG. The Cytoplasmic segment spans residues 287 to 315; that stretch reads NSKLKQTFVEMLRCESGHLKPGSKGPIFS.

This sequence belongs to the G-protein coupled receptor T2R family.

It is found in the membrane. In terms of biological role, gustducin-coupled receptor implicated in the perception of bitter compounds in the oral cavity and the gastrointestinal tract. Signals through PLCB2 and the calcium-regulated cation channel TRPM5. The polypeptide is Taste receptor type 2 member 3 (TAS2R3) (Pongo pygmaeus (Bornean orangutan)).